We begin with the raw amino-acid sequence, 122 residues long: UPF0231 protein VV1_1657 (122 aa).

It belongs to the UPF0231 family.

The chain is UPF0231 protein VV1_1657 from Vibrio vulnificus (strain CMCP6).